Here is a 322-residue protein sequence, read N- to C-terminus: Pantothenate kinase (322 aa).

104-111 (GSVAVGKS) contacts ATP.

This sequence belongs to the prokaryotic pantothenate kinase family.

The protein localises to the cytoplasm. The enzyme catalyses (R)-pantothenate + ATP = (R)-4'-phosphopantothenate + ADP + H(+). It participates in cofactor biosynthesis; coenzyme A biosynthesis; CoA from (R)-pantothenate: step 1/5. This chain is Pantothenate kinase, found in Leifsonia xyli subsp. xyli (strain CTCB07).